Consider the following 282-residue polypeptide: uncharacterized protein (282 aa).

Helical transmembrane passes span 18–38 (PIVL…WAGT), 40–60 (LLVV…VTIG), 87–107 (LWIV…TPVV), 119–139 (ALHF…GAMV), 164–184 (IPVD…PMLI), and 260–280 (VTLA…SLIL).

Belongs to the CbiQ family.

Its subcellular location is the cell membrane. This is an uncharacterized protein from Mycobacterium tuberculosis (strain CDC 1551 / Oshkosh).